Here is a 270-residue protein sequence, read N- to C-terminus: Cyclic AMP-dependent transcription factor ATF-1 (270 aa).

Positions Met1–Val91 are disordered. Over residues Thr9–Gln21 the composition is skewed to polar residues. A KID domain is found at Gln31 to Ala90. Ser63 is subject to Phosphoserine; by CaMK1, CDK3, RPS6KA4 and RPS6KA5. Residues Ile67 to Gly83 show a composition bias toward basic and acidic residues. Ser197 carries the phosphoserine; by HIPK2 modification. Glycyl lysine isopeptide (Lys-Gly) (interchain with G-Cter in SUMO2) cross-links involve residues Lys207 and Lys214. Residues Gln212 to Val270 form the bZIP domain. The basic motif stretch occupies residues Lys214–Lys238. A leucine-zipper region spans residues Leu240–Leu261.

Belongs to the bZIP family. ATF subfamily. Binds DNA as a dimer. Interacts with HIPK2 and CDK3. Interacts with MOTS-c, a peptide produced by the mitochondrially encoded 12S rRNA MT-RNR1; the interaction occurs in the nucleus following metabolic stress. Phosphorylated at Ser-197 by HIPK2 in response to genotoxic stress. This phosphorylation promotes transcription repression of FTH1 and other antioxidant detoxification genes. The CDK3-mediated phosphorylation at Ser-63 promotes its transactivation and transcriptional activities. Phosphorylated at Ser-63 by RPS6KA4 and RPS6KA5 in response to mitogenic or stress stimuli.

The protein localises to the nucleus. This protein binds the cAMP response element (CRE) (consensus: 5'-GTGACGT[AC][AG]-3'), a sequence present in many viral and cellular promoters. Mediates PKA-induced stimulation of CRE-reporter genes. Represses the expression of FTH1 and other antioxidant detoxification genes. Triggers cell proliferation and transformation. The chain is Cyclic AMP-dependent transcription factor ATF-1 (ATF1) from Bos taurus (Bovine).